The following is a 306-amino-acid chain: MTQEFAVTTPETTQTVGTARVKRGMAEMLKGGVIMDVVTPEQAKIAEDAGAVAVMALERVPADIRAQGGVSRMSDPDMIDGIINAVSIPVMAKARIGHFVEAQILQSLGVDYIDESEVLTPADYTNHIDKWQFTVPFVCGATNLGEALRRITEGAAMIRSKGEAGTGDVSNATTHMRKIRQEIRKLAALPEDELYVAAKELQAPYELVREVAETGKLPVVLFTAGGIATPADAAMMMQLGAEGVFVGSGIFKSGNPAQRAEAIVKATTFYDDPDVLAKVSRGLGEAMVGINVEEIPQPHRLAERGW.

Aspartate 36 contacts D-ribose 5-phosphate. Lysine 93 serves as the catalytic Schiff-base intermediate with D-ribose 5-phosphate. Glycine 165 contributes to the D-ribose 5-phosphate binding site. Arginine 177 lines the D-glyceraldehyde 3-phosphate pocket. D-ribose 5-phosphate-binding positions include glycine 226 and 247–248; that span reads GS.

This sequence belongs to the PdxS/SNZ family. In the presence of PdxT, forms a dodecamer of heterodimers.

It carries out the reaction aldehydo-D-ribose 5-phosphate + D-glyceraldehyde 3-phosphate + L-glutamine = pyridoxal 5'-phosphate + L-glutamate + phosphate + 3 H2O + H(+). It participates in cofactor biosynthesis; pyridoxal 5'-phosphate biosynthesis. Functionally, catalyzes the formation of pyridoxal 5'-phosphate from ribose 5-phosphate (RBP), glyceraldehyde 3-phosphate (G3P) and ammonia. The ammonia is provided by the PdxT subunit. Can also use ribulose 5-phosphate and dihydroxyacetone phosphate as substrates, resulting from enzyme-catalyzed isomerization of RBP and G3P, respectively. The polypeptide is Pyridoxal 5'-phosphate synthase subunit PdxS (Nocardia farcinica (strain IFM 10152)).